The chain runs to 378 residues: SWI/SNF-related matrix-associated actin-dependent regulator of chromatin subfamily B member 1 (378 aa).

Positions 1–106 (MIMALSKTFG…DEKYKAVSIS (106 aa)) are DNA-binding.

Belongs to the SNF5 family. As to quaternary structure, component of the multiprotein chromatin-remodeling complexes SWI/SNF. Component of neural progenitors-specific chromatin remodeling complex (npBAF complex) and the neuron-specific chromatin remodeling complex (nBAF complex). Component of the BAF (SWI/SNF) chromatin remodeling complex. Component of the SWI/SNF-B (PBAF) chromatin remodeling complex. Binds to double-stranded DNA.

It localises to the nucleus. Its function is as follows. Involved in chromatin-remodeling. Core component of the BAF (SWI/SNF) complex. This ATP-dependent chromatin-remodeling complex plays important roles in cell proliferation and differentiation, in cellular antiviral activities and inhibition of tumor formation. Belongs to the neural progenitors-specific chromatin remodeling complex (npBAF complex) and the neuron-specific chromatin remodeling complex (nBAF complex) and may play a role in neural development. This Xenopus tropicalis (Western clawed frog) protein is SWI/SNF-related matrix-associated actin-dependent regulator of chromatin subfamily B member 1 (smarcb1).